The following is a 654-amino-acid chain: DNA ligase (654 aa).

NAD(+)-binding positions include 34 to 38 (DLEYD), 83 to 84 (SL), and E114. The N6-AMP-lysine intermediate role is filled by K116. The NAD(+) site is built by R137, E171, K280, and K304. Residues C396, C399, C414, and C419 each coordinate Zn(2+). A BRCT domain is found at 577 to 654 (VISTILSGYT…EEQFYDLIKQ (78 aa)).

It belongs to the NAD-dependent DNA ligase family. LigA subfamily. It depends on Mg(2+) as a cofactor. Requires Mn(2+) as cofactor.

It catalyses the reaction NAD(+) + (deoxyribonucleotide)n-3'-hydroxyl + 5'-phospho-(deoxyribonucleotide)m = (deoxyribonucleotide)n+m + AMP + beta-nicotinamide D-nucleotide.. Its function is as follows. DNA ligase that catalyzes the formation of phosphodiester linkages between 5'-phosphoryl and 3'-hydroxyl groups in double-stranded DNA using NAD as a coenzyme and as the energy source for the reaction. It is essential for DNA replication and repair of damaged DNA. The polypeptide is DNA ligase (Mycoplasmopsis agalactiae (strain NCTC 10123 / CIP 59.7 / PG2) (Mycoplasma agalactiae)).